Consider the following 90-residue polypeptide: MARDNGNKDRDGKRPNGGRNRKMKRKICSFCMEKSESIDYKDINKLRKYVTERGKILPRRISGNCAKHQRELTIAIKRARNIALLPFTTE.

Residues Met1–Arg14 show a composition bias toward basic and acidic residues. Residues Met1–Met23 form a disordered region.

Belongs to the bacterial ribosomal protein bS18 family. Part of the 30S ribosomal subunit. Forms a tight heterodimer with protein bS6.

Binds as a heterodimer with protein bS6 to the central domain of the 16S rRNA, where it helps stabilize the platform of the 30S subunit. This is Small ribosomal subunit protein bS18 from Clostridium acetobutylicum (strain ATCC 824 / DSM 792 / JCM 1419 / IAM 19013 / LMG 5710 / NBRC 13948 / NRRL B-527 / VKM B-1787 / 2291 / W).